The chain runs to 582 residues: Protein alan shepard (582 aa).

Positions Met1–Gln12 are enriched in pro residues. A disordered region spans residues Met1–Phe73. At Tyr5 the chain carries Phosphotyrosine. Over residues Gln13–Gln24 the composition is skewed to low complexity. Residues Gln25 to Met35 are compositionally biased toward gly residues. The span at Gly37–Gly57 shows a compositional bias: polar residues. Residues Ser58–Ala72 show a composition bias toward low complexity. A phosphotyrosine mark is found at Tyr125 and Tyr142. The disordered stretch occupies residues Pro164–Gly225. Residues Ser178 to Gly225 are compositionally biased toward low complexity. RRM domains follow at residues Thr231–Gln304 and Thr310–Gly389. The tract at residues Pro555–Lys582 is disordered.

Functionally, has a role in the perception of gravity. The chain is Protein alan shepard from Drosophila erecta (Fruit fly).